The chain runs to 283 residues: Elongation factor Ts (283 aa).

The interval 80 to 83 is involved in Mg(2+) ion dislocation from EF-Tu; sequence TDFV.

The protein belongs to the EF-Ts family.

The protein localises to the cytoplasm. In terms of biological role, associates with the EF-Tu.GDP complex and induces the exchange of GDP to GTP. It remains bound to the aminoacyl-tRNA.EF-Tu.GTP complex up to the GTP hydrolysis stage on the ribosome. This is Elongation factor Ts from Citrobacter koseri (strain ATCC BAA-895 / CDC 4225-83 / SGSC4696).